A 389-amino-acid polypeptide reads, in one-letter code: Large ribosomal subunit protein uL3 (389 aa).

This sequence belongs to the universal ribosomal protein uL3 family. Component of the large ribosomal subunit. Mature ribosomes consist of a small (40S) and a large (60S) subunit. The 40S subunit contains about 32 different proteins and 1 molecule of RNA (18S). The 60S subunit contains 45 different proteins and 3 molecules of RNA (25S, 5.8S and 5S).

It is found in the cytoplasm. Component of the ribosome, a large ribonucleoprotein complex responsible for the synthesis of proteins in the cell. The small ribosomal subunit (SSU) binds messenger RNAs (mRNAs) and translates the encoded message by selecting cognate aminoacyl-transfer RNA (tRNA) molecules. The large subunit (LSU) contains the ribosomal catalytic site termed the peptidyl transferase center (PTC), which catalyzes the formation of peptide bonds, thereby polymerizing the amino acids delivered by tRNAs into a polypeptide chain. The nascent polypeptides leave the ribosome through a tunnel in the LSU and interact with protein factors that function in enzymatic processing, targeting, and the membrane insertion of nascent chains at the exit of the ribosomal tunnel. RPL3 plays a role in coordinating processes of accommodating the aminoacyl-tRNA in the PTC. The protein is Large ribosomal subunit protein uL3 of Candida albicans (strain SC5314 / ATCC MYA-2876) (Yeast).